A 204-amino-acid chain; its full sequence is Large ribosomal subunit protein uL4 (204 aa).

The segment at 49 to 75 (TKGRSDVSGGGKKPWRQKGRGGARAGS) is disordered.

It belongs to the universal ribosomal protein uL4 family. In terms of assembly, part of the 50S ribosomal subunit.

In terms of biological role, one of the primary rRNA binding proteins, this protein initially binds near the 5'-end of the 23S rRNA. It is important during the early stages of 50S assembly. It makes multiple contacts with different domains of the 23S rRNA in the assembled 50S subunit and ribosome. Functionally, forms part of the polypeptide exit tunnel. The chain is Large ribosomal subunit protein uL4 from Campylobacter lari (strain RM2100 / D67 / ATCC BAA-1060).